Consider the following 673-residue polypeptide: Ion-translocating oxidoreductase complex subunit C (673 aa).

4Fe-4S ferredoxin-type domains lie at 368-397 and 407-436; these read MGAP…QQLY and KATA…VQYF. [4Fe-4S] cluster-binding residues include Cys-377, Cys-380, Cys-383, Cys-387, Cys-416, Cys-419, Cys-422, and Cys-426. Residues 529–554 form a disordered region; that stretch reads EARKAQARAKQAGHPMADSATSGDDP.

Belongs to the 4Fe4S bacterial-type ferredoxin family. RnfC subfamily. As to quaternary structure, the complex is composed of six subunits: RsxA, RsxB, RsxC, RsxD, RsxE and RsxG. Requires [4Fe-4S] cluster as cofactor.

The protein localises to the cell inner membrane. Its function is as follows. Part of a membrane-bound complex that couples electron transfer with translocation of ions across the membrane. Required to maintain the reduced state of SoxR. The chain is Ion-translocating oxidoreductase complex subunit C from Salmonella arizonae (strain ATCC BAA-731 / CDC346-86 / RSK2980).